Reading from the N-terminus, the 189-residue chain is Gluconokinase (189 aa).

Residue 16–23 participates in ATP binding; the sequence is GVSGAGKS.

Belongs to the gluconokinase GntK/GntV family. As to quaternary structure, monomer.

It catalyses the reaction D-gluconate + ATP = 6-phospho-D-gluconate + ADP + H(+). Its pathway is carbohydrate acid metabolism; D-gluconate degradation. Its function is as follows. Phosphorylates gluconate to 6-phosphogluconate. The chain is Gluconokinase from Arabidopsis thaliana (Mouse-ear cress).